The following is a 30-amino-acid chain: U1-poneritoxin-Ng3e (30 aa).

Expressed by the venom gland.

Its subcellular location is the secreted. Functionally, has activity against some Gram-positive bacteria and S.cerevisiae. Has a non-hemolytic activity. The protein is U1-poneritoxin-Ng3e of Neoponera goeldii (Ponerine ant).